The following is a 427-amino-acid chain: 3-phosphoshikimate 1-carboxyvinyltransferase (427 aa).

3 residues coordinate 3-phosphoshikimate: lysine 20, serine 21, and arginine 25. Lysine 20 lines the phosphoenolpyruvate pocket. Positions 92 and 120 each coordinate phosphoenolpyruvate. Residues serine 166, glutamine 168, aspartate 312, and lysine 339 each contribute to the 3-phosphoshikimate site. Glutamine 168 is a phosphoenolpyruvate binding site. Aspartate 312 functions as the Proton acceptor in the catalytic mechanism. Phosphoenolpyruvate is bound by residues arginine 343 and arginine 385.

It belongs to the EPSP synthase family. In terms of assembly, monomer.

The protein resides in the cytoplasm. The catalysed reaction is 3-phosphoshikimate + phosphoenolpyruvate = 5-O-(1-carboxyvinyl)-3-phosphoshikimate + phosphate. It participates in metabolic intermediate biosynthesis; chorismate biosynthesis; chorismate from D-erythrose 4-phosphate and phosphoenolpyruvate: step 6/7. Its function is as follows. Catalyzes the transfer of the enolpyruvyl moiety of phosphoenolpyruvate (PEP) to the 5-hydroxyl of shikimate-3-phosphate (S3P) to produce enolpyruvyl shikimate-3-phosphate and inorganic phosphate. This Streptococcus equi subsp. zooepidemicus (strain MGCS10565) protein is 3-phosphoshikimate 1-carboxyvinyltransferase.